The following is a 156-amino-acid chain: Small ribosomal subunit protein uS7 (156 aa).

It belongs to the universal ribosomal protein uS7 family. In terms of assembly, part of the 30S ribosomal subunit. Contacts proteins S9 and S11.

In terms of biological role, one of the primary rRNA binding proteins, it binds directly to 16S rRNA where it nucleates assembly of the head domain of the 30S subunit. Is located at the subunit interface close to the decoding center, probably blocks exit of the E-site tRNA. The protein is Small ribosomal subunit protein uS7 of Burkholderia multivorans (strain ATCC 17616 / 249).